A 207-amino-acid polypeptide reads, in one-letter code: Adenine phosphoribosyltransferase (207 aa).

Residues methionine 1–alanine 33 form a disordered region.

It belongs to the purine/pyrimidine phosphoribosyltransferase family. As to quaternary structure, homodimer.

Its subcellular location is the cytoplasm. The catalysed reaction is AMP + diphosphate = 5-phospho-alpha-D-ribose 1-diphosphate + adenine. It participates in purine metabolism; AMP biosynthesis via salvage pathway; AMP from adenine: step 1/1. Its function is as follows. Catalyzes a salvage reaction resulting in the formation of AMP, that is energically less costly than de novo synthesis. The polypeptide is Adenine phosphoribosyltransferase (Corynebacterium jeikeium (strain K411)).